The chain runs to 177 residues: Protein-export protein SecB (177 aa).

The segment at 1 to 22 (MSDENNSGAAAPEAQNPGQNAA) is disordered. The segment covering 8 to 22 (GAAAPEAQNPGQNAA) has biased composition (low complexity).

The protein belongs to the SecB family. Homotetramer, a dimer of dimers. One homotetramer interacts with 1 SecA dimer.

The protein localises to the cytoplasm. Functionally, one of the proteins required for the normal export of preproteins out of the cell cytoplasm. It is a molecular chaperone that binds to a subset of precursor proteins, maintaining them in a translocation-competent state. It also specifically binds to its receptor SecA. This chain is Protein-export protein SecB, found in Paracoccus denitrificans (strain Pd 1222).